The primary structure comprises 812 residues: Axin-2 (812 aa).

The interval 1–43 is disordered; the sequence is MNRTLTDPMVSSFREDDPRPPVPGEEGETTCHHPSKLAMMRPK. One can recognise an RGS domain in the interval 84 to 203; the sequence is SLHFLLGDQD…LTSDIYLEYV (120 aa). Disordered stretches follow at residues 275–326, 388–430, 446–484, and 609–726; these read SYRR…AIPP, ETMS…TCEE, TPGC…SSMN, and RQTK…SGCH. Residues 285-303 show a composition bias toward polar residues; sequence NRFTSGYSFAPATSANDSE. Residues 305-323 show a composition bias toward low complexity; it reads SSDALTDDSMSMTDSSVDA. Residues 329 to 415 form an interaction with GSK3B region; sequence LGSKKQLQRE…RDESEMSSSS (87 aa). Residues 388–397 are compositionally biased toward basic and acidic residues; that stretch reads ETMSSLEERL. The segment covering 401–410 has biased composition (acidic residues); it reads QEEEERDESE. Low complexity predominate over residues 411–421; that stretch reads MSSSSASHSLP. The segment at 415–467 is interaction with beta-catenin; the sequence is SASHSLPLLPPGTCEEDPQAILDEHLSRVLKTPGCQSPGLLRHSPRSRSPEQR. Positions 475 to 484 are enriched in polar residues; that stretch reads STRSQSSSMN. Residues 672-683 show a composition bias toward basic and acidic residues; the sequence is EEARRRLEEVSK. One can recognise a DIX domain in the interval 730–812; sequence GSETVVTYFF…KILGKVDRMD (83 aa).

In terms of assembly, interacts with hwa; leading to promote the tankyrase-mediated degradation of axin1. In terms of processing, ADP-ribosylated by tankyrase tnks and tnks2. Poly-ADP-ribosylated protein is recognized by rnf146, followed by ubiquitination and subsequent activation of the Wnt signaling pathway. Ubiquitinated by rnf146 when poly-ADP-ribosylated, leading to its degradation and subsequent activation of the Wnt signaling pathway.

It localises to the cytoplasm. In terms of biological role, component of the beta-catenin destruction complex required for regulating ctnnb1 levels through phosphorylation and ubiquitination, and modulating Wnt-signaling. Controls dorsoventral patterning by down-regulating ctnnb1 to inhibit the Wnt signaling pathway and ventralize embryos. The protein is Axin-2 (axin2) of Danio rerio (Zebrafish).